Reading from the N-terminus, the 377-residue chain is Succinyl-diaminopimelate desuccinylase (377 aa).

A Zn(2+)-binding site is contributed by His-67. Residue Asp-69 is part of the active site. Asp-100 contributes to the Zn(2+) binding site. Glu-134 serves as the catalytic Proton acceptor. Glu-135, Glu-163, and His-349 together coordinate Zn(2+).

It belongs to the peptidase M20A family. DapE subfamily. As to quaternary structure, homodimer. Requires Zn(2+) as cofactor. Co(2+) is required as a cofactor.

The catalysed reaction is N-succinyl-(2S,6S)-2,6-diaminopimelate + H2O = (2S,6S)-2,6-diaminopimelate + succinate. It functions in the pathway amino-acid biosynthesis; L-lysine biosynthesis via DAP pathway; LL-2,6-diaminopimelate from (S)-tetrahydrodipicolinate (succinylase route): step 3/3. Functionally, catalyzes the hydrolysis of N-succinyl-L,L-diaminopimelic acid (SDAP), forming succinate and LL-2,6-diaminopimelate (DAP), an intermediate involved in the bacterial biosynthesis of lysine and meso-diaminopimelic acid, an essential component of bacterial cell walls. The polypeptide is Succinyl-diaminopimelate desuccinylase (Haemophilus influenzae (strain PittGG)).